Reading from the N-terminus, the 288-residue chain is 2-hydroxy-6-oxononadienedioate/2-hydroxy-6-oxononatrienedioate hydrolase (288 aa).

The region spanning 38 to 273 is the AB hydrolase-1 domain; it reads VVLLHGSGPG…DCGHWAQWEH (236 aa). H267 (proton acceptor) is an active-site residue.

The protein belongs to the AB hydrolase superfamily. MhpC family. In terms of assembly, homodimer.

It carries out the reaction (2Z,4E)-2-hydroxy-6-oxonona-2,4-dienedioate + H2O = (2Z)-2-hydroxypenta-2,4-dienoate + succinate + H(+). The catalysed reaction is (2Z,4E,7E)-2-hydroxy-6-oxonona-2,4,7-trienedioate + H2O = (2Z)-2-hydroxypenta-2,4-dienoate + fumarate + H(+). It functions in the pathway aromatic compound metabolism; 3-phenylpropanoate degradation. In terms of biological role, catalyzes the cleavage of the C5-C6 bond of 2-hydroxy-6-oxononadienedioate and 2-hydroxy-6-oxononatrienedioate, a dienol ring fission product of the bacterial meta-cleavage pathway for degradation of phenylpropionic acid. This Escherichia coli O139:H28 (strain E24377A / ETEC) protein is 2-hydroxy-6-oxononadienedioate/2-hydroxy-6-oxononatrienedioate hydrolase.